The following is a 121-amino-acid chain: Small ribosomal subunit protein bS6m (121 aa).

Belongs to the bacterial ribosomal protein bS6 family. In terms of assembly, component of the mitochondrial ribosome small subunit (28S) which comprises a 12S rRNA and about 30 distinct proteins.

The protein resides in the mitochondrion. The sequence is that of Small ribosomal subunit protein bS6m (MRPS6) from Gallus gallus (Chicken).